Consider the following 144-residue polypeptide: Mannitol-specific phosphotransferase enzyme IIA component (144 aa).

The 140-residue stretch at 3 to 142 (ELFSNDNIFL…EEIKQVFEEA (140 aa)) folds into the PTS EIIA type-2 domain. His-63 serves as the catalytic Tele-phosphohistidine intermediate. A Phosphohistidine; by HPr modification is found at His-63.

In terms of assembly, homodimer or homotrimer. Seems to be a monomer when not phosphorylated.

It localises to the cytoplasm. Its function is as follows. The phosphoenolpyruvate-dependent sugar phosphotransferase system (sugar PTS), a major carbohydrate active transport system, catalyzes the phosphorylation of incoming sugar substrates concomitantly with their translocation across the cell membrane. The enzyme II CmtAB PTS system is involved in D-mannitol transport. In Staphylococcus aureus (strain MRSA252), this protein is Mannitol-specific phosphotransferase enzyme IIA component (mtlF).